Here is a 511-residue protein sequence, read N- to C-terminus: 2-isopropylmalate synthase (511 aa).

The region spanning 5-267 is the Pyruvate carboxyltransferase domain; sequence LIIFDTTLRD…DTNIDTMHIL (263 aa). The Mn(2+) site is built by aspartate 14, histidine 202, histidine 204, and asparagine 238. A regulatory domain region spans residues 393-511; it reads KLVSLKVCTE…TVTNKAHPQI (119 aa).

It belongs to the alpha-IPM synthase/homocitrate synthase family. LeuA type 1 subfamily. Homodimer. Requires Mn(2+) as cofactor.

It is found in the cytoplasm. It catalyses the reaction 3-methyl-2-oxobutanoate + acetyl-CoA + H2O = (2S)-2-isopropylmalate + CoA + H(+). It functions in the pathway amino-acid biosynthesis; L-leucine biosynthesis; L-leucine from 3-methyl-2-oxobutanoate: step 1/4. In terms of biological role, catalyzes the condensation of the acetyl group of acetyl-CoA with 3-methyl-2-oxobutanoate (2-ketoisovalerate) to form 3-carboxy-3-hydroxy-4-methylpentanoate (2-isopropylmalate). The sequence is that of 2-isopropylmalate synthase from Vesicomyosocius okutanii subsp. Calyptogena okutanii (strain HA).